The primary structure comprises 255 residues: Carboxy-S-adenosyl-L-methionine synthase (255 aa).

S-adenosyl-L-methionine is bound by residues tyrosine 45, 70–72, 124–125, and asparagine 139; these read GCS and DI.

The protein belongs to the class I-like SAM-binding methyltransferase superfamily. Cx-SAM synthase family. Homodimer.

It carries out the reaction prephenate + S-adenosyl-L-methionine = carboxy-S-adenosyl-L-methionine + 3-phenylpyruvate + H2O. In terms of biological role, catalyzes the conversion of S-adenosyl-L-methionine (SAM) to carboxy-S-adenosyl-L-methionine (Cx-SAM). This is Carboxy-S-adenosyl-L-methionine synthase from Hamiltonella defensa subsp. Acyrthosiphon pisum (strain 5AT).